Reading from the N-terminus, the 604-residue chain is MVELEKRRRPPPQLQHSPYVRDQSNSQGMTKTPETSPPKRPMGRARSNSRSSGSRSNVDIDQYTIPPGLDLLPTASSPPSVHQVSQQQQLSPILANKIRSPFENQSQDQNDNSIDPTPAGQVTIPVEAVSPPALDELSKFQNGSTETLFRTGSPRKKHTHIIILKSLNATFETKFLVVPFKPDGLKLGRPVTNSVNKNNSGSKRDLFSQQVRPDNGNFDSRVLSRNHACLSCDPTSGKIYIRDLKSSNGTFVNGVKIRQNDVELKVGDTVDLGTDIDSKFEHRKISAYVEEISVIPLMNTVSDPTNLVMKKQDHTNKNNGNSTNINGIKIDRGHHNQHIPIRSHLKENYTEAGVTSATTAQRAAFEAAMFGDINNSELDDDILGPETEVLSGIFINNSAGTSINLINMIKTLTTELSLEKQELEKLHSMQNFMQNYTINLDFINKHMIDMNEKHLLKLSTALQKTLSENNDALLKESEDQLKEIKQQNNKVKSACSLKEKQNHEKLQELESELRELNLQIEEERGKNLVLTQSNFNGGINNDNNAKVKQNDSREEKKDTEDTLISTEELGVVEGKRTRVSKGMLFGVVAISFGLVATAVKQLPQ.

Residues 1-89 form a disordered region; it reads MVELEKRRRP…SVHQVSQQQQ (89 aa). At 1-578 the chain is on the cytoplasmic side; that stretch reads MVELEKRRRP…LGVVEGKRTR (578 aa). Over residues 22–34 the composition is skewed to polar residues; sequence DQSNSQGMTKTPE. Composition is skewed to low complexity over residues 44-57 and 77-89; these read RARS…SRSN and SPPS…QQQQ. Residues 185-257 enclose the FHA domain; that stretch reads LKLGRPVTNS…NGTFVNGVKI (73 aa). Positions 404–563 form a coiled coil; sequence NLINMIKTLT…EEKKDTEDTL (160 aa). The tract at residues 539–561 is disordered; the sequence is INNDNNAKVKQNDSREEKKDTED. Positions 548-560 are enriched in basic and acidic residues; it reads KQNDSREEKKDTE. The chain crosses the membrane as a helical; Anchor for type IV membrane protein span at residues 579–598; it reads VSKGMLFGVVAISFGLVATA. Residues 599–604 lie on the Lumenal side of the membrane; sequence VKQLPQ.

Component of a complex at least composed of FAR3, FAR7, FAR8, FAR10, FAR11 and VPS64.

Its subcellular location is the endoplasmic reticulum membrane. Its function is as follows. Participates in the control of the reentry into the cell cycle following pheromone treatment. Involved in vacuolar protein sorting. The sequence is that of Vacuolar protein sorting-associated protein 64 (VPS64) from Saccharomyces cerevisiae (strain ATCC 204508 / S288c) (Baker's yeast).